The sequence spans 421 residues: Adenylosuccinate synthetase (421 aa).

Residues 11–17 (GDEGKGK) and 39–41 (GHT) contribute to the GTP site. The Proton acceptor role is filled by Asp-12. Mg(2+) is bound by residues Asp-12 and Gly-39. Residues 12 to 15 (DEGK), 37 to 40 (NAGH), Thr-129, Arg-143, Asn-219, Thr-234, and Arg-298 each bind IMP. The active-site Proton donor is His-40. Residue 294–300 (VTTGRRR) coordinates substrate. GTP is bound by residues Arg-300, 326–328 (KLD), and 409–411 (GTG).

Belongs to the adenylosuccinate synthetase family. In terms of assembly, homodimer. Requires Mg(2+) as cofactor.

It is found in the cytoplasm. The catalysed reaction is IMP + L-aspartate + GTP = N(6)-(1,2-dicarboxyethyl)-AMP + GDP + phosphate + 2 H(+). It participates in purine metabolism; AMP biosynthesis via de novo pathway; AMP from IMP: step 1/2. Functionally, plays an important role in the de novo pathway and in the salvage pathway of purine nucleotide biosynthesis. Catalyzes the first committed step in the biosynthesis of AMP from IMP. The protein is Adenylosuccinate synthetase of Paracoccidioides lutzii (strain ATCC MYA-826 / Pb01) (Paracoccidioides brasiliensis).